Reading from the N-terminus, the 400-residue chain is DNA polymerase IV (400 aa).

Positions 8-191 (ILLCDANSFF…LPVRELFGIG (184 aa)) constitute a UmuC domain. 2 residues coordinate Mg(2+): aspartate 12 and aspartate 109. Glutamate 110 is an active-site residue.

Belongs to the DNA polymerase type-Y family. Monomer. It depends on Mg(2+) as a cofactor.

Its subcellular location is the cytoplasm. It carries out the reaction DNA(n) + a 2'-deoxyribonucleoside 5'-triphosphate = DNA(n+1) + diphosphate. Its function is as follows. Poorly processive, error-prone DNA polymerase involved in untargeted mutagenesis. Copies undamaged DNA at stalled replication forks, which arise in vivo from mismatched or misaligned primer ends. These misaligned primers can be extended by PolIV. Exhibits no 3'-5' exonuclease (proofreading) activity. May be involved in translesional synthesis, in conjunction with the beta clamp from PolIII. This Moorella thermoacetica (strain ATCC 39073 / JCM 9320) protein is DNA polymerase IV.